Consider the following 592-residue polypeptide: MEKARPLWANSLQFVFACISYAVGLGNVWRFPYLCQMYGGGSFLVPYIIMLIVEGMPLLYLELAVGQRMRQGSIGAWRTISPYLSGVGVASVVVSFFLSMYYNVINAWAFWYLFHSFQDPLPWSVCPLNGNHTGYDEECEKASSTQYFWYRKTLNISPSLQENGGVQWEPALCLLLAWLVVYLCILRGTESTGKVVYFTASLPYCVLIIYLIRGLTLHGATNGLMYMFTPKIEQLANPKAWINAATQIFFSLGLGFGSLIAFASYNEPSNNCQKHAIIVSLINSFTSIFASIVTFSIYGFKATFNYENCLKKVSLLLTNTFDLEDGFLTASNLEQVKGYLASAYPSKYSEMFPQIKNCSLESELDTAVQGTGLAFIVYTEAIKNMEVSQLWSVLYFFMLLMLGIGSMLGNTAAILTPLTDSKIISSHLPKEAISGLVCLVNCAIGMVFTMEAGNYWFDIFNDYAATLSLLLIVLVETIAVCYVYGLRRFESDLKAMTGRAVSWYWKVMWAGVSPLLIVSLFVFYLSDYILTGTLKYQAWDASQGQLVTKDYPAYALAVIGLLVASSTMCIPLAALGTFVQRRLKRGDADPVA.

Over 1–5 (MEKAR) the chain is Cytoplasmic. A helical membrane pass occupies residues 6–26 (PLWANSLQFVFACISYAVGLG). Over 27-42 (NVWRFPYLCQMYGGGS) the chain is Extracellular. The helical transmembrane segment at 43-63 (FLVPYIIMLIVEGMPLLYLEL) threads the bilayer. Residues 64-79 (AVGQRMRQGSIGAWRT) are Cytoplasmic-facing. The chain crosses the membrane as a helical span at residues 80-100 (ISPYLSGVGVASVVVSFFLSM). The Extracellular segment spans residues 101 to 165 (YYNVINAWAF…ISPSLQENGG (65 aa)). N131 is a glycosylation site (N-linked (GlcNAc...) asparagine). Residues 166-186 (VQWEPALCLLLAWLVVYLCIL) traverse the membrane as a helical segment. Residues 187-194 (RGTESTGK) are Cytoplasmic-facing. The helical transmembrane segment at 195 to 215 (VVYFTASLPYCVLIIYLIRGL) threads the bilayer. Topologically, residues 216–241 (TLHGATNGLMYMFTPKIEQLANPKAW) are extracellular. A helical membrane pass occupies residues 242–262 (INAATQIFFSLGLGFGSLIAF). Topologically, residues 263 to 276 (ASYNEPSNNCQKHA) are cytoplasmic. The chain crosses the membrane as a helical span at residues 277–297 (IIVSLINSFTSIFASIVTFSI). Residues 298–389 (YGFKATFNYE…EAIKNMEVSQ (92 aa)) lie on the Extracellular side of the membrane. An N-linked (GlcNAc...) asparagine glycan is attached at N357. Residues 390–410 (LWSVLYFFMLLMLGIGSMLGN) form a helical membrane-spanning segment. Residues 411-431 (TAAILTPLTDSKIISSHLPKE) lie on the Cytoplasmic side of the membrane. A helical transmembrane segment spans residues 432 to 452 (AISGLVCLVNCAIGMVFTMEA). Over 453–465 (GNYWFDIFNDYAA) the chain is Extracellular. Residues 466–486 (TLSLLLIVLVETIAVCYVYGL) form a helical membrane-spanning segment. Topologically, residues 487-504 (RRFESDLKAMTGRAVSWY) are cytoplasmic. Residues 505–525 (WKVMWAGVSPLLIVSLFVFYL) traverse the membrane as a helical segment. Over 526–554 (SDYILTGTLKYQAWDASQGQLVTKDYPAY) the chain is Extracellular. Residues 555–575 (ALAVIGLLVASSTMCIPLAAL) form a helical membrane-spanning segment. Topologically, residues 576–592 (GTFVQRRLKRGDADPVA) are cytoplasmic.

Belongs to the sodium:neurotransmitter symporter (SNF) (TC 2.A.22) family. SLC6A20 subfamily. As to expression, kidney and small intestine. Expressed in the S3 segment of the proximal tubule. Expressed in neurons.

It localises to the apical cell membrane. It carries out the reaction L-proline(out) + chloride(out) + 2 Na(+)(out) = L-proline(in) + chloride(in) + 2 Na(+)(in). The enzyme catalyses L-pipecolate(out) + chloride(out) + 2 Na(+)(out) = L-pipecolate(in) + chloride(in) + 2 Na(+)(in). The catalysed reaction is sarcosine(out) + chloride(out) + 2 Na(+)(out) = sarcosine(in) + chloride(in) + 2 Na(+)(in). It catalyses the reaction N-methyl-L-proline(out) + chloride(out) + 2 Na(+)(out) = N-methyl-L-proline(in) + chloride(in) + 2 Na(+)(in). It carries out the reaction 2-methyl-2-(methylamino)propanoate(out) + chloride(out) + 2 Na(+)(out) = 2-methyl-2-(methylamino)propanoate(in) + chloride(in) + 2 Na(+)(in). The enzyme catalyses glycine betaine(out) + chloride(out) + 2 Na(+)(out) = glycine betaine(in) + chloride(in) + 2 Na(+)(in). The catalysed reaction is glycine(out) + chloride(out) + 2 Na(+)(out) = glycine(in) + chloride(in) + 2 Na(+)(in). Mediates the Na(+)- and Cl(-)-dependent uptake of imino acids such as L-proline, N-methyl-L-proline and pipecolate as well as N-methylated amino acids. Also transports glycine, regulates proline and glycine homeostasis in the brain playing a role in the modulation of NMDAR currents. This chain is Sodium- and chloride-dependent transporter XTRP3, found in Homo sapiens (Human).